An 88-amino-acid chain; its full sequence is Putative transposase InsN for insertion sequence element IS911B (88 aa).

It belongs to the transposase 8 family.

Involved in the transposition of the insertion sequence IS911. This is Putative transposase InsN for insertion sequence element IS911B (insN2) from Escherichia coli (strain K12).